Reading from the N-terminus, the 1025-residue chain is Serine/threonine-protein kinase TAO2 (1025 aa).

One can recognise a Protein kinase domain in the interval 28–281 (FADLREIGHG…SDMLLKHRFL (254 aa)). Residues 34–42 (IGHGSFGAV) and Lys57 each bind ATP. The active-site Proton acceptor is the Asp151. The span at 349–373 (ESSQSVPSMSISASSQSSSVNSLAD) shows a compositional bias: low complexity. The segment at 349–377 (ESSQSVPSMSISASSQSSSVNSLADASDD) is disordered. Coiled-coil stretches lie at residues 457–650 (SALR…ECAM) and 755–876 (ILKR…EIEA). 2 disordered regions span residues 899 to 930 (FNQG…QNTG) and 945 to 1025 (SASW…LSYS). Residues 905-914 (APPPGWPSRP) are compositionally biased toward pro residues. Residues 947–986 (SWGLHPPGSSSSLSALPSSSSSSSSSPSSSSGGRPGLLLL) are compositionally biased toward low complexity. A compositionally biased stretch (polar residues) spans 1007–1025 (SRSTSVTSQLSNGSHLSYS).

The protein belongs to the protein kinase superfamily. STE Ser/Thr protein kinase family. STE20 subfamily. Requires Mg(2+) as cofactor.

The catalysed reaction is L-seryl-[protein] + ATP = O-phospho-L-seryl-[protein] + ADP + H(+). It catalyses the reaction L-threonyl-[protein] + ATP = O-phospho-L-threonyl-[protein] + ADP + H(+). Functionally, serine/threonine-protein kinase involved in different processes such as apoptotic morphological changes, MAPK8/JNK and MAPK14/p38 MAPK signaling pathway. In terms of biological role, activates the JNK MAP kinase pathway. The polypeptide is Serine/threonine-protein kinase TAO2 (taok2) (Xenopus laevis (African clawed frog)).